Here is a 448-residue protein sequence, read N- to C-terminus: Bifunctional protein GlmU (448 aa).

Residues 1–232 are pyrophosphorylase; it reads MTARSSLTIV…EDEVRGINTK (232 aa). UDP-N-acetyl-alpha-D-glucosamine contacts are provided by residues 11-14, Lys-25, Gln-78, and 83-84; these read LAAG and GT. A Mg(2+)-binding site is contributed by Asp-108. UDP-N-acetyl-alpha-D-glucosamine is bound by residues Gly-144, Glu-158, Asn-173, and Asn-230. Asn-230 lines the Mg(2+) pocket. The linker stretch occupies residues 233-253; sequence AQLAQAEAAMQARLRQAAMDA. The segment at 254 to 448 is N-acetyltransferase; it reads GVTLIAPETV…FRNAKLRQTK (195 aa). The UDP-N-acetyl-alpha-D-glucosamine site is built by Arg-319 and Lys-337. The Proton acceptor role is filled by His-349. UDP-N-acetyl-alpha-D-glucosamine-binding residues include Tyr-352 and Asn-363. Residues Ala-366, 372–373, Ser-409, and Arg-426 each bind acetyl-CoA; that span reads NY. The disordered stretch occupies residues 427 to 448; it reads SPQTTKEGAAARFRNAKLRQTK.

The protein in the N-terminal section; belongs to the N-acetylglucosamine-1-phosphate uridyltransferase family. It in the C-terminal section; belongs to the transferase hexapeptide repeat family. As to quaternary structure, homotrimer. It depends on Mg(2+) as a cofactor.

The protein localises to the cytoplasm. The catalysed reaction is alpha-D-glucosamine 1-phosphate + acetyl-CoA = N-acetyl-alpha-D-glucosamine 1-phosphate + CoA + H(+). The enzyme catalyses N-acetyl-alpha-D-glucosamine 1-phosphate + UTP + H(+) = UDP-N-acetyl-alpha-D-glucosamine + diphosphate. It participates in nucleotide-sugar biosynthesis; UDP-N-acetyl-alpha-D-glucosamine biosynthesis; N-acetyl-alpha-D-glucosamine 1-phosphate from alpha-D-glucosamine 6-phosphate (route II): step 2/2. It functions in the pathway nucleotide-sugar biosynthesis; UDP-N-acetyl-alpha-D-glucosamine biosynthesis; UDP-N-acetyl-alpha-D-glucosamine from N-acetyl-alpha-D-glucosamine 1-phosphate: step 1/1. Its pathway is bacterial outer membrane biogenesis; LPS lipid A biosynthesis. Catalyzes the last two sequential reactions in the de novo biosynthetic pathway for UDP-N-acetylglucosamine (UDP-GlcNAc). The C-terminal domain catalyzes the transfer of acetyl group from acetyl coenzyme A to glucosamine-1-phosphate (GlcN-1-P) to produce N-acetylglucosamine-1-phosphate (GlcNAc-1-P), which is converted into UDP-GlcNAc by the transfer of uridine 5-monophosphate (from uridine 5-triphosphate), a reaction catalyzed by the N-terminal domain. The protein is Bifunctional protein GlmU of Bradyrhizobium sp. (strain ORS 278).